A 129-amino-acid chain; its full sequence is Small ribosomal subunit protein uS9 (129 aa).

Belongs to the universal ribosomal protein uS9 family.

This is Small ribosomal subunit protein uS9 from Nitratiruptor sp. (strain SB155-2).